We begin with the raw amino-acid sequence, 586 residues long: CTP synthase 2 (586 aa).

Residues 300–554 (SIALVGKYTK…LAATGNLNAY (255 aa)) form the Glutamine amidotransferase type-1 domain. Catalysis depends on for GATase activity residues C399, H526, and E528. A disordered region spans residues 564 to 586 (SDRYSDASDDSFSEPRLAELEIS). S568, S571, and S574 each carry phosphoserine.

This sequence belongs to the CTP synthase family.

It catalyses the reaction UTP + L-glutamine + ATP + H2O = CTP + L-glutamate + ADP + phosphate + 2 H(+). It functions in the pathway pyrimidine metabolism; CTP biosynthesis via de novo pathway; CTP from UDP: step 2/2. Catalyzes the ATP-dependent amination of UTP to CTP with either L-glutamine or ammonia as the source of nitrogen. Constitutes the rate-limiting enzyme in the synthesis of cytosine nucleotides. The protein is CTP synthase 2 (CTPS2) of Bos taurus (Bovine).